Here is a 260-residue protein sequence, read N- to C-terminus: Cytosolic Fe-S cluster assembly factor Nubp2 homolog 2 (260 aa).

G14–S21 serves as a coordination point for ATP. Residues C188 and C191 each coordinate [4Fe-4S] cluster.

It belongs to the Mrp/NBP35 ATP-binding proteins family. NUBP2/CFD1 subfamily. In terms of assembly, heterotetramer of 2 Nubp1 and 2 Nubp2 chains. The cofactor is [4Fe-4S] cluster.

Its subcellular location is the cytoplasm. Its function is as follows. Component of the cytosolic iron-sulfur (Fe/S) protein assembly (CIA) machinery. Required for maturation of extramitochondrial Fe-S proteins. The Nubp1-Nubp2 heterotetramer forms a Fe-S scaffold complex, mediating the de novo assembly of an Fe-S cluster and its transfer to target apoproteins. This chain is Cytosolic Fe-S cluster assembly factor Nubp2 homolog 2, found in Drosophila yakuba (Fruit fly).